Reading from the N-terminus, the 182-residue chain is Methyl-CpG-binding domain-containing protein 5 (182 aa).

2 disordered regions span residues 1–56 (MSNG…GTVD) and 80–126 (HGTP…KPLN). The region spanning 25–101 (KRATPGDDNW…ENGDSHSEHS (77 aa)) is the MBD domain. A compositionally biased stretch (basic and acidic residues) spans 92-105 (ENGDSHSEHSEGRG). A compositionally biased stretch (basic residues) spans 106-115 (SARRQTKSNK).

As to quaternary structure, homodimer and heterodimer with MBD6. Interacts with DDM1 via its MBD domain. In terms of tissue distribution, mostly expressed in flowers, and, to a lower extent, in seedlings, buds, stems and mature seeds, but barely in roots, exclusively in root meristem cells at tips (at protein level).

It localises to the nucleus. It is found in the chromosome. Its function is as follows. Transcriptional regulator that binds CpG islands in promoters where the DNA is methylated at position 5 of cytosine within CpG dinucleotides. In addition, binds specifically methylated m(5)CpNpN but not m(5)CpNpG (N is A, T or C). Plays probably a role in gene silencing. The protein is Methyl-CpG-binding domain-containing protein 5 (MBD5) of Arabidopsis thaliana (Mouse-ear cress).